The sequence spans 1493 residues: Son of sevenless homolog (1493 aa).

Residues 244–448 (TYESVAVDFL…ERVVGCVSDM (205 aa)) form the DH domain. Positions 496-606 (ELEKDGDLGM…WMAVLVKVTT (111 aa)) constitute a PH domain. Residues 656 to 824 (GIPVIKCGTV…TILALIEKRV (169 aa)) form the N-terminal Ras-GEF domain. Residues 897–1164 (HPIEIGRQLT…YNKSLEIQPK (268 aa)) form the Ras-GEF domain. 3 disordered regions span residues 1067 to 1091 (KSPP…DPEN), 1165 to 1248 (GLDT…DDAP), and 1263 to 1493 (HPKI…SSNK). Residues 1079-1088 (QQKDDLKASD) are compositionally biased toward basic and acidic residues. Composition is skewed to polar residues over residues 1208-1231 (HSQN…NTPL) and 1279-1289 (SRANQSNSVSL). Residues 1308–1326 (STATSPTTLTTTTTPSSAG) show a composition bias toward low complexity. Positions 1350–1361 (LTPSRDNSSPSA) are enriched in polar residues. A compositionally biased stretch (low complexity) spans 1381–1400 (STSSDVSSSPSTSGSTSSAT). A compositionally biased stretch (basic and acidic residues) spans 1402–1417 (ENQEQLRVIFDREESH). Pro residues predominate over residues 1426–1435 (PLPPALPPPR). Positions 1453-1464 (HNSNSPTLSSEQ) are enriched in polar residues.

Interacts with cmd-1 in the presence of Ca(2+).

In terms of biological role, promotes the exchange of Ras-bound GDP by GTP. May regulate signaling pathways downstream of receptor tyrosine kinase, egl-15 and let-23. Required for larval and male spicule development, fluid homeostasis, vulva induction, spermatogenesis, and oogenesis by promoting meiosis prophase exit during oocyte maturation. Required for the delamination of G1 cell by promoting the loss of cell junctions and detachment from the excretory system during larval development. Plays a role in nicotinic acetylcholine receptor (nAChR)-mediated sensitivity to nicotine. Regulates synaptic levels of nAchR subunit lev-1 in the nerve cord. The chain is Son of sevenless homolog from Caenorhabditis elegans.